A 276-amino-acid polypeptide reads, in one-letter code: Secreted RxLR effector protein 150 (276 aa).

Residues 1–18 form the signal peptide; the sequence is MRNIAFLIGLFFIGYSSC. Residues 49 to 64 carry the RxLR-dEER motif; the sequence is RTLQADDRERILAEER.

Belongs to the RxLR effector family.

The protein resides in the secreted. Its subcellular location is the host nucleus. It is found in the host cytoplasm. Its function is as follows. Secreted effector that partially suppresses the host cell death induced by cell death-inducing proteins. In Plasmopara viticola (Downy mildew of grapevine), this protein is Secreted RxLR effector protein 150.